Reading from the N-terminus, the 286-residue chain is MACSRFEYVKSFEQDDSILPNVWIVIRIDGKKFHKFSKTHDFEKPNDENALNVMNAAATAVMQEFRDIVLAYGQSDEYSFVFRKETAAFKRRSAKLLTYVTSLFSSSYVMQWSKWMNLPLAYAPCFDGRVVLYPSEQNLKDYLSWRQADVHVNNLYNTAFWKLVLEKGLTNQQAEAKLRGTFSADKNELLFQEFGINYNNLPAMYRKGTILLRKRVILGEKSRQAVVPLHEDLISSQFWKEHTEILGKYVPGTYDAPQTFPRLVEMQINGKDDNEAEEPQNLAGTS.

Positions 29, 30, and 76 each coordinate Mg(2+). GTP-binding positions include 29–34 (DGKKFH) and 75–76 (SD).

This sequence belongs to the tRNA(His) guanylyltransferase family. Mg(2+) is required as a cofactor.

It carries out the reaction a 5'-end ribonucleotide-tRNA(His) + GTP + ATP + H2O = a 5'-end phospho-guanosine-ribonucleotide-tRNA(His) + AMP + 2 diphosphate + H(+). Adds a GMP to the 5'-end of tRNA(His) after transcription and RNase P cleavage. In Drosophila melanogaster (Fruit fly), this protein is Probable tRNA(His) guanylyltransferase.